A 151-amino-acid polypeptide reads, in one-letter code: D-aminoacyl-tRNA deacylase (151 aa).

The Gly-cisPro motif, important for rejection of L-amino acids signature appears at 137 to 138; the sequence is GP.

The protein belongs to the DTD family. In terms of assembly, homodimer.

The protein resides in the cytoplasm. It catalyses the reaction glycyl-tRNA(Ala) + H2O = tRNA(Ala) + glycine + H(+). The enzyme catalyses a D-aminoacyl-tRNA + H2O = a tRNA + a D-alpha-amino acid + H(+). In terms of biological role, an aminoacyl-tRNA editing enzyme that deacylates mischarged D-aminoacyl-tRNAs. Also deacylates mischarged glycyl-tRNA(Ala), protecting cells against glycine mischarging by AlaRS. Acts via tRNA-based rather than protein-based catalysis; rejects L-amino acids rather than detecting D-amino acids in the active site. By recycling D-aminoacyl-tRNA to D-amino acids and free tRNA molecules, this enzyme counteracts the toxicity associated with the formation of D-aminoacyl-tRNA entities in vivo and helps enforce protein L-homochirality. The sequence is that of D-aminoacyl-tRNA deacylase from Acaryochloris marina (strain MBIC 11017).